The primary structure comprises 482 residues: tRNA modification GTPase MnmE (482 aa).

Residues Arg25, Glu82, and Lys135 each contribute to the (6S)-5-formyl-5,6,7,8-tetrahydrofolate site. A TrmE-type G domain is found at 231–404; it reads GIKVVIAGQP…LRRVLLDIAG (174 aa). Residue Asn241 coordinates K(+). Residues 241 to 246, 260 to 266, 285 to 288, and 385 to 387 contribute to the GTP site; these read NAGKSS, TPIAGTT, DTAG, and SAR. Ser245 is a binding site for Mg(2+). Residues Thr260, Ile262, and Thr265 each contribute to the K(+) site. Thr266 provides a ligand contact to Mg(2+). (6S)-5-formyl-5,6,7,8-tetrahydrofolate is bound at residue Lys482.

Belongs to the TRAFAC class TrmE-Era-EngA-EngB-Septin-like GTPase superfamily. TrmE GTPase family. Homodimer. Heterotetramer of two MnmE and two MnmG subunits. It depends on K(+) as a cofactor.

The protein localises to the cytoplasm. Its function is as follows. Exhibits a very high intrinsic GTPase hydrolysis rate. Involved in the addition of a carboxymethylaminomethyl (cmnm) group at the wobble position (U34) of certain tRNAs, forming tRNA-cmnm(5)s(2)U34. The protein is tRNA modification GTPase MnmE of Paracidovorax citrulli (strain AAC00-1) (Acidovorax citrulli).